The chain runs to 140 residues: Large ribosomal subunit protein uL16 (140 aa).

The protein belongs to the universal ribosomal protein uL16 family. Part of the 50S ribosomal subunit.

Functionally, binds 23S rRNA and is also seen to make contacts with the A and possibly P site tRNAs. This is Large ribosomal subunit protein uL16 from Syntrophus aciditrophicus (strain SB).